A 113-amino-acid polypeptide reads, in one-letter code: U11-theraphotoxin-Hhn1u (113 aa).

The signal sequence occupies residues 1-21 (MNTVRVTFLLVFVLAVSLGQA). Residues 22 to 74 (DKDENRMEMQEKTEQGKSYLDFAENLLLQKLEELEAKLLEEDSEESRNSRQKR) constitute a propeptide that is removed on maturation. Disulfide bonds link Cys-75-Cys-90, Cys-82-Cys-95, and Cys-89-Cys-110.

Belongs to the neurotoxin 14 (magi-1) family. 01 (HNTX-16) subfamily. As to expression, expressed by the venom gland.

It localises to the secreted. Functionally, probable ion channel inhibitor. The chain is U11-theraphotoxin-Hhn1u from Cyriopagopus hainanus (Chinese bird spider).